The primary structure comprises 396 residues: MALKLNPFLSQTQKLPSFALPPMASTRSPKFYMASTLKSGSKEVENLKKPFMPPREVHVQVTHSMPPQKIEIFKSLDNWAEENILVHLKPVEKCWQPQDFLPDPASDGFDEQVRELRERAKEIPDDYFVVLVGDMITEEALPTYQTMLNTLDGVRDETGASPTSWAIWTRAWTAEENRHGDLLNKYLYLSGRVDMRQIEKTIQYLIGSGMDPRTENSPYLGFIYTSFQERATFISHGNTARQAKEHGDIKLAQICGTIAADEKRHETAYTKIVEKLFEIDPDGTVLAFADMMRKKISMPAHLMYDGRDDNLFDHFSAVAQRLGVYTAKDYADILEFLVGRWKVDKLTGLSAEGQKAQDYVCRLPPRIRRLEERAQGRAKEAPTMPFSWIFDRQVKL.

The transit peptide at 1-33 (MALKLNPFLSQTQKLPSFALPPMASTRSPKFYM) directs the protein to the chloroplast. Fe cation-binding residues include E138, E176, H179, E229, E262, and H265.

This sequence belongs to the fatty acid desaturase type 2 family. In terms of assembly, homodimer. Requires Fe(2+) as cofactor. As to expression, higher levels in developing seeds than in leaf and root tissues.

It is found in the plastid. The protein resides in the chloroplast. It carries out the reaction octadecanoyl-[ACP] + 2 reduced [2Fe-2S]-[ferredoxin] + O2 + 2 H(+) = (9Z)-octadecenoyl-[ACP] + 2 oxidized [2Fe-2S]-[ferredoxin] + 2 H2O. It functions in the pathway lipid metabolism; fatty acid metabolism. Converts stearoyl-ACP to oleoyl-ACP by introduction of a cis double bond between carbons 9 and 10 of the acyl chain. The sequence is that of Stearoyl-[acyl-carrier-protein] 9-desaturase, chloroplastic from Ricinus communis (Castor bean).